Reading from the N-terminus, the 903-residue chain is Protein translocase subunit SecA (903 aa).

ATP contacts are provided by residues glutamine 89, 107–111 (GEGKT), and aspartate 502. Residues cysteine 886, cysteine 888, cysteine 897, and histidine 898 each contribute to the Zn(2+) site.

It belongs to the SecA family. As to quaternary structure, monomer and homodimer. Part of the essential Sec protein translocation apparatus which comprises SecA, SecYEG and auxiliary proteins SecDF-YajC and YidC. Zn(2+) serves as cofactor.

It is found in the cell inner membrane. Its subcellular location is the cytoplasm. It catalyses the reaction ATP + H2O + cellular proteinSide 1 = ADP + phosphate + cellular proteinSide 2.. Its function is as follows. Part of the Sec protein translocase complex. Interacts with the SecYEG preprotein conducting channel. Has a central role in coupling the hydrolysis of ATP to the transfer of proteins into and across the cell membrane, serving both as a receptor for the preprotein-SecB complex and as an ATP-driven molecular motor driving the stepwise translocation of polypeptide chains across the membrane. In Rhizobium meliloti (strain 1021) (Ensifer meliloti), this protein is Protein translocase subunit SecA.